The primary structure comprises 111 residues: WAP four-disulfide core domain protein 12 (111 aa).

The signal sequence occupies residues 1-23; the sequence is MGSSSFLVLMVSLVLVTLVAVEG. The WAP domain maps to 27–74; that stretch reads GIEKAGVCPADNVRCFKSDPPQCHTDQDCLGERKCCYLHCGFKCVIPV. 4 cysteine pairs are disulfide-bonded: C34/C62, C41/C66, C49/C61, and C55/C70. Residues 80–111 are disordered; that stretch reads GGNKDEDVSRPYPEPGWEAKCPGSSSTRCPQK. A compositionally biased stretch (polar residues) spans 102 to 111; sequence GSSSTRCPQK.

As to expression, highly expressed in prostate, skin, lung and esophagus. Weakly expressed in skeletal muscle, epididymis, kidney, trachea, salivary gland, testis and seminal vesicle.

It is found in the secreted. In terms of biological role, antibacterial protein. Putative acid-stable proteinase inhibitor. The protein is WAP four-disulfide core domain protein 12 (WFDC12) of Homo sapiens (Human).